Here is a 62-residue protein sequence, read N- to C-terminus: Large ribosomal subunit protein bL32 (62 aa).

The segment covering 1 to 18 (MGVPKKRTSKMRRDRRRA) has biased composition (basic residues). A disordered region spans residues 1-22 (MGVPKKRTSKMRRDRRRAANNN).

The protein belongs to the bacterial ribosomal protein bL32 family.

This Myxococcus xanthus (strain DK1622) protein is Large ribosomal subunit protein bL32.